A 149-amino-acid chain; its full sequence is Vesicle-associated protein 3-1 (149 aa).

Methionine 1 is modified (N-acetylmethionine). At serine 2 the chain carries N-acetylserine; in Vesicle-associated protein 3-1, N-terminally processed. One can recognise an MSP domain in the interval 6 to 126; it reads LLEIEPMYLQ…EETKLRVTYV (121 aa).

Belongs to the VAMP-associated protein (VAP) (TC 9.B.17) family.

May play a role in vesicle trafficking. This is Vesicle-associated protein 3-1 (PVA31) from Arabidopsis thaliana (Mouse-ear cress).